The sequence spans 128 residues: Ribosome-binding factor A (128 aa).

Belongs to the RbfA family. As to quaternary structure, monomer. Binds 30S ribosomal subunits, but not 50S ribosomal subunits or 70S ribosomes.

The protein resides in the cytoplasm. One of several proteins that assist in the late maturation steps of the functional core of the 30S ribosomal subunit. Associates with free 30S ribosomal subunits (but not with 30S subunits that are part of 70S ribosomes or polysomes). Required for efficient processing of 16S rRNA. May interact with the 5'-terminal helix region of 16S rRNA. In Saccharophagus degradans (strain 2-40 / ATCC 43961 / DSM 17024), this protein is Ribosome-binding factor A.